Reading from the N-terminus, the 125-residue chain is Large ribosomal subunit protein bL12 (125 aa).

This sequence belongs to the bacterial ribosomal protein bL12 family. Homodimer. Part of the ribosomal stalk of the 50S ribosomal subunit. Forms a multimeric L10(L12)X complex, where L10 forms an elongated spine to which 2 to 4 L12 dimers bind in a sequential fashion. Binds GTP-bound translation factors.

Forms part of the ribosomal stalk which helps the ribosome interact with GTP-bound translation factors. Is thus essential for accurate translation. In Liberibacter africanus (Citrus greening disease), this protein is Large ribosomal subunit protein bL12.